The sequence spans 338 residues: MMAMNSKQPFGMHPVLQEPKFSSLHSGSEAMRRVCLPAPQLQGNIFGSFDESLLARAEALAAVDIVSHGKNHPFKPDATYHTMSSVPCTSTSSTVPISHPAALTSHPHHAVHQGLEGDLLEHISPTLSVSGLGAPEHSVMPAQIHPHHLGAMGHLHQAMGMSHPHTVAPHSAMPACLSDVESDPRELEAFAERFKQRRIKLGVTQADVGAALANLKIPGVGSLSQSTICRFESLTLSHNNMIALKPVLQAWLEEAEAAYREKNSKPELFNGSERKRKRTSIAAPEKRSLEAYFAIQPRPSSEKIAAIAEKLDLKKNVVRVWFCNQRQKQKRMKYSAVH.

Positions 56-65 (RAEALAAVDI) match the POU-IV box motif. Residues 179–256 (DVESDPRELE…VLQAWLEEAE (78 aa)) form the POU-specific domain. Residues 274–333 (RKRKRTSIAAPEKRSLEAYFAIQPRPSSEKIAAIAEKLDLKKNVVRVWFCNQRQKQKRMK) constitute a DNA-binding region (homeobox).

This sequence belongs to the POU transcription factor family. Class-4 subfamily. Interacts with ISL1. As to expression, brain. Seems to be specific to the retina.

Its subcellular location is the nucleus. It localises to the cytoplasm. In terms of biological role, acts as a transcriptional activator. Acts by binding to sequences related to the consensus octamer motif 5'-ATGCAAAT-3' in the regulatory regions of its target genes. Involved in the auditory system development, required for terminal differentiation of hair cells in the inner ear. This is POU domain, class 4, transcription factor 3 (POU4F3) from Homo sapiens (Human).